The sequence spans 215 residues: Imidazole glycerol phosphate synthase subunit HisH (215 aa).

The region spanning 7–215 (TIAVIDYGMG…LLKNFVEWQP (209 aa)) is the Glutamine amidotransferase type-1 domain. Residue C86 is the Nucleophile of the active site. Residues H195 and E197 contribute to the active site.

In terms of assembly, heterodimer of HisH and HisF.

It is found in the cytoplasm. The catalysed reaction is 5-[(5-phospho-1-deoxy-D-ribulos-1-ylimino)methylamino]-1-(5-phospho-beta-D-ribosyl)imidazole-4-carboxamide + L-glutamine = D-erythro-1-(imidazol-4-yl)glycerol 3-phosphate + 5-amino-1-(5-phospho-beta-D-ribosyl)imidazole-4-carboxamide + L-glutamate + H(+). It carries out the reaction L-glutamine + H2O = L-glutamate + NH4(+). It participates in amino-acid biosynthesis; L-histidine biosynthesis; L-histidine from 5-phospho-alpha-D-ribose 1-diphosphate: step 5/9. Functionally, IGPS catalyzes the conversion of PRFAR and glutamine to IGP, AICAR and glutamate. The HisH subunit catalyzes the hydrolysis of glutamine to glutamate and ammonia as part of the synthesis of IGP and AICAR. The resulting ammonia molecule is channeled to the active site of HisF. The protein is Imidazole glycerol phosphate synthase subunit HisH of Dechloromonas aromatica (strain RCB).